We begin with the raw amino-acid sequence, 290 residues long: Nucleotide-binding protein Bpet0443 (290 aa).

An ATP-binding site is contributed by 9-16 (GISGSGKS). 58–61 (DVRS) is a GTP binding site.

The protein belongs to the RapZ-like family.

Displays ATPase and GTPase activities. In Bordetella petrii (strain ATCC BAA-461 / DSM 12804 / CCUG 43448), this protein is Nucleotide-binding protein Bpet0443.